We begin with the raw amino-acid sequence, 423 residues long: Mannitol-1-phosphate 5-dehydrogenase (423 aa).

Cys40, His69, and Glu70 together coordinate Zn(2+).

Belongs to the zinc-containing alcohol dehydrogenase family. Requires Zn(2+) as cofactor.

The enzyme catalyses D-mannitol 1-phosphate + NAD(+) = beta-D-fructose 6-phosphate + NADH + H(+). Functionally, seems to be involved in mannitol utilization. Complements an E.coli mtlD deletion mutant. The protein is Mannitol-1-phosphate 5-dehydrogenase of Aliivibrio fischeri (strain ATCC 700601 / ES114) (Vibrio fischeri).